The sequence spans 224 residues: Polysialic acid transport ATP-binding protein KpsT (224 aa).

Positions 2 to 223 (IKIENLTKSY…EYKMYQDLDI (222 aa)) constitute an ABC transporter domain. 38 to 45 (GRNGAGKS) provides a ligand contact to ATP.

Belongs to the ABC transporter superfamily.

It localises to the cell inner membrane. Putative ATP-binding protein, and an energy coupling component for the transport of polysialic acid across the cytoplasmic membrane. The polypeptide is Polysialic acid transport ATP-binding protein KpsT (kpsT) (Escherichia coli).